The chain runs to 75 residues: Exodeoxyribonuclease 7 small subunit (75 aa).

It belongs to the XseB family. As to quaternary structure, heterooligomer composed of large and small subunits.

Its subcellular location is the cytoplasm. The enzyme catalyses Exonucleolytic cleavage in either 5'- to 3'- or 3'- to 5'-direction to yield nucleoside 5'-phosphates.. Bidirectionally degrades single-stranded DNA into large acid-insoluble oligonucleotides, which are then degraded further into small acid-soluble oligonucleotides. In Geobacter sp. (strain M21), this protein is Exodeoxyribonuclease 7 small subunit.